A 323-amino-acid polypeptide reads, in one-letter code: tRNA dimethylallyltransferase (323 aa).

An ATP-binding site is contributed by glycine 12–threonine 19. Threonine 14–threonine 19 is a binding site for substrate. Interaction with substrate tRNA regions lie at residues aspartate 37 to leucine 40 and glutamine 161 to arginine 165.

The protein belongs to the IPP transferase family. As to quaternary structure, monomer. It depends on Mg(2+) as a cofactor.

It carries out the reaction adenosine(37) in tRNA + dimethylallyl diphosphate = N(6)-dimethylallyladenosine(37) in tRNA + diphosphate. Catalyzes the transfer of a dimethylallyl group onto the adenine at position 37 in tRNAs that read codons beginning with uridine, leading to the formation of N6-(dimethylallyl)adenosine (i(6)A). The sequence is that of tRNA dimethylallyltransferase from Pseudomonas putida (strain GB-1).